A 378-amino-acid polypeptide reads, in one-letter code: Cytochrome b (378 aa).

The next 4 membrane-spanning stretches (helical) occupy residues 32–52 (FGSLLGLCLVIQILTGLFLAM), 76–97 (WLIRYMHANGASMFFICLFLHV), 112–132 (WNIGVILLFAVMATAFMGYVL), and 177–197 (FFAFHFILPFIVAALVMVHLL). Heme b-binding residues include H82 and H96. Residues H181 and H195 each contribute to the heme b site. H200 contacts a ubiquinone. 4 consecutive transmembrane segments (helical) span residues 225-245 (IKDALGIFLLLLLFMTLVLFF), 287-307 (LGGVLALIFSILILMMFPILH), 319-339 (LSQCLFWILVADLFTLTWIGG), and 346-366 (FITIGQVASIIYFVIILFALP).

Belongs to the cytochrome b family. In terms of assembly, the cytochrome bc1 complex contains 11 subunits: 3 respiratory subunits (MT-CYB, CYC1 and UQCRFS1), 2 core proteins (UQCRC1 and UQCRC2) and 6 low-molecular weight proteins (UQCRH/QCR6, UQCRB/QCR7, UQCRQ/QCR8, UQCR10/QCR9, UQCR11/QCR10 and a cleavage product of UQCRFS1). This cytochrome bc1 complex then forms a dimer. Requires heme b as cofactor.

The protein localises to the mitochondrion inner membrane. Functionally, component of the ubiquinol-cytochrome c reductase complex (complex III or cytochrome b-c1 complex) that is part of the mitochondrial respiratory chain. The b-c1 complex mediates electron transfer from ubiquinol to cytochrome c. Contributes to the generation of a proton gradient across the mitochondrial membrane that is then used for ATP synthesis. The chain is Cytochrome b (MT-CYB) from Sciurus aberti (Abert's squirrel).